The following is a 73-amino-acid chain: Large ribosomal subunit protein bL31 (73 aa).

This sequence belongs to the bacterial ribosomal protein bL31 family. Type A subfamily. In terms of assembly, part of the 50S ribosomal subunit.

Binds the 23S rRNA. This chain is Large ribosomal subunit protein bL31 (rpmE), found in Ruegeria pomeroyi (strain ATCC 700808 / DSM 15171 / DSS-3) (Silicibacter pomeroyi).